The following is a 417-amino-acid chain: Solanesyl diphosphate synthase 2, chloroplastic (417 aa).

Residues 1–60 (MMMSCRNIDLGTSVLDHSCSSSSTSRRFLFGNSSKTVCMIGGRSCVGNLVFLRRDLATCR) constitute a chloroplast transit peptide. Residues Lys-137, Arg-140, and His-175 each coordinate isopentenyl diphosphate. Residues Asp-182 and Asp-186 each coordinate Mg(2+). Arg-191 is a binding site for an all-trans-polyprenyl diphosphate. Position 192 (Arg-192) interacts with isopentenyl diphosphate. The an all-trans-polyprenyl diphosphate site is built by Lys-268, Thr-269, Gln-306, and Lys-323.

The protein belongs to the FPP/GGPP synthase family. In terms of assembly, homodimer. Interacts with FBN5. The cofactor is Mg(2+). Higher expression in leaves than in roots.

The protein localises to the plastid. The protein resides in the chloroplast. It carries out the reaction 5 isopentenyl diphosphate + (2E,6E,10E)-geranylgeranyl diphosphate = all-trans-nonaprenyl diphosphate + 5 diphosphate. Functionally, involved in providing solanesyl diphosphate for plastoquinone-9 (PQ-9) formation in plastids. Catalyzes the elongation of the prenyl side chain of PQ-9 in plastids. Contributes to the biosynthesis of plastochromanol-8 (PC-8) in plastids. Does not contribute to the synthesis of tocopherol or ubiquinone. PQ-9 and PC-8 are lipophilic antioxidants that act as protectant against photooxidative stress under high light stress conditions. Prefers geranylgeranyl diphosphate to farnesyl diphosphate as substrate. No activity with geranyl diphosphate or dimethylallyl diphosphate as substrate. The sequence is that of Solanesyl diphosphate synthase 2, chloroplastic from Arabidopsis thaliana (Mouse-ear cress).